Consider the following 213-residue polypeptide: Kiwellin (213 aa).

The signal sequence occupies residues 1 to 24 (MAQLALLLLSLFLTLISLAPPGAS). 3 cysteine pairs are disulfide-bonded: Cys-28–Cys-60, Cys-32–Cys-44, and Cys-38–Cys-49. 4-hydroxyproline is present on residues Pro-65 and Pro-67. 4 cysteine pairs are disulfide-bonded: Cys-72/Cys-90, Cys-80/Cys-172, Cys-119/Cys-144, and Cys-166/Cys-172. Residues 91–121 (SPPVTSSTPAKLTNNDFSEGGDDGGPSECDE) form a disordered region. The span at 93-107 (PVTSSTPAKLTNNDF) shows a compositional bias: polar residues.

It belongs to the kiwellin family. Post-translationally, undergoes proteolytic cleavage by actinidin to produce kissper and KiTH. Three forms of KiTH are produced by cleavage at different sites, the main form produced in vivo is KiTH-1.

It localises to the secreted. In terms of biological role, pH-dependent, voltage-gated and anion-selective pore-forming peptide. This is Kiwellin from Actinidia deliciosa (Kiwi).